Here is a 373-residue protein sequence, read N- to C-terminus: Muscleblind-like protein 2 (373 aa).

4 consecutive C3H1-type zinc fingers follow at residues 13-41 (WLTL…HPPK), 47-73 (NGRV…HPPT), 176-204 (TDKL…HPAD), and 212-238 (DNTV…HPPA).

This sequence belongs to the muscleblind family. Interacts with ITGA3.

It is found in the nucleus. It localises to the cytoplasm. In terms of biological role, mediates pre-mRNA alternative splicing regulation. Acts either as activator or repressor of splicing on specific pre-mRNA targets. Inhibits cardiac troponin-T (TNNT2) pre-mRNA exon inclusion but induces insulin receptor (IR) pre-mRNA exon inclusion in muscle. Antagonizes the alternative splicing activity pattern of CELF proteins. RNA-binding protein that binds to 5'ACACCC-3' core sequence, termed zipcode, within the 3'UTR of ITGA3. Binds to CUG triplet repeat expansion in myotonic dystrophy muscle cells by sequestering the target RNAs. Together with RNA binding proteins RBPMS and RBFOX2, activates vascular smooth muscle cells alternative splicing events. Regulates NCOR2 alternative splicing. Seems to regulate expression and localization of ITGA3 by transporting it from the nucleus to cytoplasm at adhesion plaques. May play a role in myotonic dystrophy pathophysiology (DM). This chain is Muscleblind-like protein 2 (Mbnl2), found in Mus musculus (Mouse).